The primary structure comprises 413 residues: Gamma-glutamyl phosphate reductase (413 aa).

Belongs to the gamma-glutamyl phosphate reductase family.

The protein resides in the cytoplasm. It catalyses the reaction L-glutamate 5-semialdehyde + phosphate + NADP(+) = L-glutamyl 5-phosphate + NADPH + H(+). Its pathway is amino-acid biosynthesis; L-proline biosynthesis; L-glutamate 5-semialdehyde from L-glutamate: step 2/2. Functionally, catalyzes the NADPH-dependent reduction of L-glutamate 5-phosphate into L-glutamate 5-semialdehyde and phosphate. The product spontaneously undergoes cyclization to form 1-pyrroline-5-carboxylate. This is Gamma-glutamyl phosphate reductase from Salinispora tropica (strain ATCC BAA-916 / DSM 44818 / JCM 13857 / NBRC 105044 / CNB-440).